The chain runs to 66 residues: Small ribosomal subunit protein bS21 (66 aa).

It belongs to the bacterial ribosomal protein bS21 family.

This chain is Small ribosomal subunit protein bS21, found in Solidesulfovibrio magneticus (strain ATCC 700980 / DSM 13731 / RS-1) (Desulfovibrio magneticus).